The sequence spans 347 residues: GMP reductase (347 aa).

108–131 (AEFEKVKKIMALSEEFVFICIDIA) is a binding site for NADP(+). K(+)-binding residues include Gly181 and Gly183. Cys186 (thioimidate intermediate) is an active-site residue. Position 216 to 239 (216 to 239 (IIGDGGCSCAGDVSKAFGGGADFV)) interacts with NADP(+).

It belongs to the IMPDH/GMPR family. GuaC type 1 subfamily. Homotetramer.

The enzyme catalyses IMP + NH4(+) + NADP(+) = GMP + NADPH + 2 H(+). Its function is as follows. Catalyzes the irreversible NADPH-dependent deamination of GMP to IMP. It functions in the conversion of nucleobase, nucleoside and nucleotide derivatives of G to A nucleotides, and in maintaining the intracellular balance of A and G nucleotides. The protein is GMP reductase of Vibrio atlanticus (strain LGP32) (Vibrio splendidus (strain Mel32)).